The sequence spans 205 residues: Adenylyl-sulfate kinase (205 aa).

31 to 38 (GLSGAGKS) lines the ATP pocket. Residue Ser-105 is the Phosphoserine intermediate of the active site.

This sequence belongs to the APS kinase family.

It catalyses the reaction adenosine 5'-phosphosulfate + ATP = 3'-phosphoadenylyl sulfate + ADP + H(+). It participates in sulfur metabolism; hydrogen sulfide biosynthesis; sulfite from sulfate: step 2/3. Its function is as follows. Catalyzes the synthesis of activated sulfate. This Shewanella denitrificans (strain OS217 / ATCC BAA-1090 / DSM 15013) protein is Adenylyl-sulfate kinase.